Reading from the N-terminus, the 158-residue chain is Transcription elongation factor GreA (158 aa).

This sequence belongs to the GreA/GreB family.

Functionally, necessary for efficient RNA polymerase transcription elongation past template-encoded arresting sites. The arresting sites in DNA have the property of trapping a certain fraction of elongating RNA polymerases that pass through, resulting in locked ternary complexes. Cleavage of the nascent transcript by cleavage factors such as GreA or GreB allows the resumption of elongation from the new 3'terminus. GreA releases sequences of 2 to 3 nucleotides. This is Transcription elongation factor GreA from Rhizobium etli (strain ATCC 51251 / DSM 11541 / JCM 21823 / NBRC 15573 / CFN 42).